Consider the following 854-residue polypeptide: DNA mismatch repair protein MutS (854 aa).

614–621 lines the ATP pocket; that stretch reads GPNMGGKS.

Belongs to the DNA mismatch repair MutS family.

Its function is as follows. This protein is involved in the repair of mismatches in DNA. It is possible that it carries out the mismatch recognition step. This protein has a weak ATPase activity. The sequence is that of DNA mismatch repair protein MutS from Sodalis glossinidius (strain morsitans).